The sequence spans 432 residues: Glutamyl-tRNA reductase (432 aa).

Substrate-binding positions include 49–52 (TCNR), Ser-101, 106–108 (EPQ), and Gln-112. Cys-50 serves as the catalytic Nucleophile. Residue 181-186 (GAGETI) participates in NADP(+) binding. A disordered region spans residues 407-432 (FPEKPGYQHPPIATPIVRTDDADPAP).

This sequence belongs to the glutamyl-tRNA reductase family. Homodimer.

It catalyses the reaction (S)-4-amino-5-oxopentanoate + tRNA(Glu) + NADP(+) = L-glutamyl-tRNA(Glu) + NADPH + H(+). It functions in the pathway porphyrin-containing compound metabolism; protoporphyrin-IX biosynthesis; 5-aminolevulinate from L-glutamyl-tRNA(Glu): step 1/2. In terms of biological role, catalyzes the NADPH-dependent reduction of glutamyl-tRNA(Glu) to glutamate 1-semialdehyde (GSA). The protein is Glutamyl-tRNA reductase of Xanthomonas oryzae pv. oryzae (strain PXO99A).